Consider the following 500-residue polypeptide: Intracellular exo-alpha-(1-&gt;5)-L-arabinofuranosidase 1 (500 aa).

Glu27, Asn72, and Asn172 together coordinate alpha-L-arabinofuranose. Glu173 functions as the Proton donor/acceptor in the catalytic mechanism. Alpha-L-arabinofuranose contacts are provided by Tyr244, Glu292, and Gln349. Glu292 functions as the Nucleophile in the catalytic mechanism.

The protein belongs to the glycosyl hydrolase 51 family. Homohexamer; trimer of dimers.

The protein localises to the cytoplasm. It catalyses the reaction Hydrolysis of terminal non-reducing alpha-L-arabinofuranoside residues in alpha-L-arabinosides.. The enzyme catalyses (20S)-ginsenoside Rc + H2O = L-arabinofuranose + (20S)-ginsenoside Rd. It functions in the pathway glycan metabolism; L-arabinan degradation. At a concentration of 5 mM, K(+), Cu(2+) and Ni(2+) exhibit inhibitory effects on the activity. Additionally, the chemical reagent SDS also displays a certain degree of inhibition. Enzymatic activity is largely unaffected by product feedback inhibition. Its function is as follows. Involved in the degradation of arabinan and is a key enzyme in the complete degradation of the plant cell wall. Catalyzes the cleavage of terminal alpha-(1-&gt;5)-arabinofuranosyl bonds in different hemicellulosic homopolysaccharides (branched and debranched arabinans). It acts preferentially on arabinotriose, arabinobiose and linear alpha-(1-&gt;5)-L-arabinan, and is much less effective on branched sugar beet arabinan. When expressed in E.coli, the recombinant enyzme can hydrolyze, with relatively low catalytic efficiency, the terminal alpha-L-arabinofuranoside at the C20 position of ginsenoside Rc to produce ginsenoside Rd, a rare ginsenoside that exhibits diverse and powerful pharmacological activities. The chain is Intracellular exo-alpha-(1-&gt;5)-L-arabinofuranosidase 1 from Bacillus subtilis (strain 168).